The primary structure comprises 1374 residues: Probable multidrug resistance-associated protein lethal(2)03659 (1374 aa).

The disordered stretch occupies residues 1–40 (MDKQPVLEPTFDSVSERENTSIEESSLLENNGFDHRNKDE). The next 6 membrane-spanning stretches (helical) occupy residues 159–179 (LLRV…VVEL), 205–225 (AGFY…MILT), 282–302 (YTVH…YLMY), 305–325 (IGIS…IQMY), 404–424 (IFLS…EIAF), and 426–446 (ITAY…SAII). The 282-residue stretch at 168–449 (GFPGLAIFVV…YVPSAIIQTA (282 aa)) folds into the ABC transmembrane type-1 1 domain. Residues 466 to 492 (ELGSSDKSEGPSKDTVPGNPPSNNNEA) are disordered. The ABC transporter 1 domain maps to 499–722 (ISIRDLKAKW…GLITGLGSLS (224 aa)). 534-541 (GLTGSGKS) contributes to the ATP binding site. N-linked (GlcNAc...) asparagine glycosylation occurs at asparagine 561. A disordered region spans residues 723 to 766 (KTDKAKTEEQEPLNLNSPDNKNEVTPIKENSEQTVGGSSSGKEH). Transmembrane regions (helical) follow at residues 787–807 (GGGL…QVAV), 845–865 (LIII…FNIA), 913–933 (VVLV…IVIA), 938–958 (LLLV…NLYL), and 1025–1045 (YCMN…FFAF). In terms of domain architecture, ABC transmembrane type-1 2 spans 793–1079 (FLVMLSSSVL…GVRQTAELEN (287 aa)). Positions 1119–1352 (FKELNLRYTP…SDSKVFHNLV (234 aa)) constitute an ABC transporter 2 domain. 1153-1160 (GRTGAGKS) is a binding site for ATP. Residues asparagine 1254 and asparagine 1353 are each glycosylated (N-linked (GlcNAc...) asparagine).

Belongs to the ABC transporter superfamily. ABCC family. Conjugate transporter (TC 3.A.1.208) subfamily. Uniform expression in embryos.

The protein resides in the membrane. Vital for development. This is Probable multidrug resistance-associated protein lethal(2)03659 (l(2)03659) from Drosophila melanogaster (Fruit fly).